The chain runs to 321 residues: MNTVGTPLLWGGFAVVVAIMLAIDLLLQGRRGAHAMTMKQAAAWSLVWVTLSLLFNAAFWWYLVQTEGRAVADPQALAFLTGYLIEKSLAVDNVFVWLMLFSYFSVPAALQRRVLVYGVLGAIVLRTIMIFTGSWLISQFDWILYIFGAFLLFTGVKMALAHEDESGIGDKPLVRWLRGHLRMTDTIDNEHFFVRKNGLLYATPLMLVLILVELSDVIFAVDSIPAIFAVTTDPFIVLTSNLFAILGLRAMYFLLAGVAERFSMLKYGLAVILVFIGIKMLIVDFYHIPIAVSLGVVFGILVMTFIINAWVNYRHDKQRGG.

At methionine 1 to threonine 6 the chain is on the periplasmic side. A helical membrane pass occupies residues proline 7–leucine 27. The Cytoplasmic portion of the chain corresponds to glutamine 28–alanine 43. The helical transmembrane segment at tryptophan 44–valine 64 threads the bilayer. The Periplasmic portion of the chain corresponds to glutamine 65–leucine 89. The helical transmembrane segment at alanine 90–leucine 110 threads the bilayer. The Cytoplasmic portion of the chain corresponds to glutamine 111–arginine 113. Residues valine 114–serine 134 form a helical membrane-spanning segment. Tryptophan 135 is a topological domain (periplasmic). Residues leucine 136–valine 156 form a helical membrane-spanning segment. The Cytoplasmic portion of the chain corresponds to lysine 157–glycine 198. A helical transmembrane segment spans residues leucine 199–phenylalanine 219. Over alanine 220–proline 225 the chain is Periplasmic. Residues alanine 226 to leucine 246 form a helical membrane-spanning segment. Residues glycine 247–arginine 261 are Cytoplasmic-facing. Residues phenylalanine 262–isoleucine 282 form a helical membrane-spanning segment. Residues valine 283–tyrosine 286 lie on the Periplasmic side of the membrane. A helical transmembrane segment spans residues histidine 287–isoleucine 307. Residues asparagine 308–glycine 321 are Cytoplasmic-facing.

The protein belongs to the TerC family.

Its subcellular location is the cell inner membrane. In terms of biological role, has been proposed to be a redox modulator. The chain is Putative membrane-bound redox modulator Alx from Escherichia coli (strain K12).